Here is a 496-residue protein sequence, read N- to C-terminus: Ganglioside-induced differentiation-associated protein 2 (496 aa).

2 disordered regions span residues 22-45 (VRDG…GLHS) and 252-271 (PERQ…DSEE). The region spanning 44-224 (HSPFPYRNDI…TYRRLLPLYF (181 aa)) is the Macro domain. Residues 254 to 264 (RQIRISEKPGG) are compositionally biased toward basic and acidic residues. In terms of domain architecture, CRAL-TRIO spans 329–483 (DLSDIAALKA…FVLDYDAREN (155 aa)).

It belongs to the GDAP2 family.

The polypeptide is Ganglioside-induced differentiation-associated protein 2 (Xenopus tropicalis (Western clawed frog)).